The primary structure comprises 286 residues: Spermidine/putrescine transport system permease protein PotB (286 aa).

The Cytoplasmic segment spans residues 1–13; that stretch reads MKIINNKFQKITV. The chain crosses the membrane as a helical span at residues 14-33; it reads AIIFSWLIFFVLIPNLLVLA. Topologically, residues 34-71 are periplasmic; that stretch reads VSFLTRDGSNFYAFPITIENYTNLFNPLYAQVVWNSLS. The ABC transmembrane type-1 domain maps to 66-274; the sequence is VWNSLSMSGI…MALLIFVYYR (209 aa). Residues 72 to 91 form a helical membrane-spanning segment; it reads MSGIATIICLLIGYPFAFMM. Over 92–100 the chain is Cytoplasmic; sequence SKIHPKYRP. The helical transmembrane segment at 101-120 threads the bilayer; it reads LLLFLVVLPFWTNSLIRIYG. The Periplasmic portion of the chain corresponds to 121-151; sequence MKVFLGVKGILNTMLIDMGILSAPIRILNTE. Residues 152–171 traverse the membrane as a helical segment; it reads IAVIIGLVYLLLPFMILPLY. The Cytoplasmic segment spans residues 172 to 199; that stretch reads SAIEKLDNRLLEAARDLGANTFQRFFRV. Residues 200–219 form a helical membrane-spanning segment; that stretch reads ILPLTMPGIIAGCLLVLLPA. Residues 220–252 are Periplasmic-facing; the sequence is MGMFYVADLLGGAKVLLVGNVIKSEFLISRNWP. Residues 253–272 traverse the membrane as a helical segment; sequence FGSAVSIGLTVLMALLIFVY. Residues 273-286 lie on the Cytoplasmic side of the membrane; that stretch reads YRANKLLNRKVELE.

It belongs to the binding-protein-dependent transport system permease family. CysTW subfamily.

It localises to the cell inner membrane. Required for the activity of the bacterial periplasmic transport system of putrescine and spermidine. The polypeptide is Spermidine/putrescine transport system permease protein PotB (potB) (Haemophilus influenzae (strain ATCC 51907 / DSM 11121 / KW20 / Rd)).